The primary structure comprises 48 residues: Delta-actitoxin-Bgr2b (48 aa).

Cystine bridges form between C4/C45, C6/C35, and C28/C46.

The protein belongs to the sea anemone sodium channel inhibitory toxin family. Type I subfamily.

The protein resides in the secreted. It localises to the nematocyst. Its function is as follows. Binds voltage-dependently at site 3 of sodium channels (Nav) and inhibits the inactivation of the activated channels, thereby blocking neuronal transmission. Has effect on SCN4A/SCN1B, and SCN5A/SCN1B, has no effect on SCN2A/SCN1B, and SCN10A/SCN1B. Possesses the highest efficacy for the insect sodium channel para/tipE. Also interacts with sodium channels in cardiac cells. Shows lethality to crabs. This Bunodosoma granuliferum (Red warty sea anemone) protein is Delta-actitoxin-Bgr2b.